Consider the following 100-residue polypeptide: Conantokin-G (100 aa).

The first 21 residues, 1 to 21, serve as a signal peptide directing secretion; it reads MHLYTYLYLLVPLVTFHLILG. A propeptide spanning residues 22 to 80 is cleaved from the precursor; that stretch reads TGTLDDGGALTERRSADATALKAEPVLLQKSAARSTDDNGKDRLTQMKRILKQRGNKAR. Residues 52-100 form a disordered region; it reads SAARSTDDNGKDRLTQMKRILKQRGNKARGEEELQENQELIREKSNGKR. Residues 56 to 66 are compositionally biased toward basic and acidic residues; the sequence is STDDNGKDRLT. The gamma-carboxylation recognition sequence that plays a role in the conversion of Glu to carboxy-Glu (Gla) stretch occupies residues 61–80; it reads GKDRLTQMKRILKQRGNKAR. Residue Glu83 participates in a divalent metal cation binding. A 4-carboxyglutamate mark is found at Glu83, Glu84, Glu87, Glu90, and Glu94. The a divalent metal cation site is built by Glu87, Glu90, and Glu94. Positions 90 to 100 are enriched in basic and acidic residues; it reads ELIREKSNGKR. Asn97 is modified (asparagine amide).

Belongs to the conotoxin B superfamily. The cofactor is Ca(2+). Mg(2+) is required as a cofactor. Expressed by the venom duct.

Its subcellular location is the secreted. In terms of biological role, conantokins inhibit N-methyl-D-aspartate (NMDA) receptors. This toxin is selective for the NR2B/GRIN2B subunit. Induces sleep-like symptoms in young mice and hyperactivity in older mice. This chain is Conantokin-G, found in Conus geographus (Geography cone).